The chain runs to 239 residues: 2,3,4,5-tetrahydropyridine-2,6-dicarboxylate N-acetyltransferase (239 aa).

It belongs to the transferase hexapeptide repeat family. DapH subfamily.

It catalyses the reaction (S)-2,3,4,5-tetrahydrodipicolinate + acetyl-CoA + H2O = L-2-acetamido-6-oxoheptanedioate + CoA. It functions in the pathway amino-acid biosynthesis; L-lysine biosynthesis via DAP pathway; LL-2,6-diaminopimelate from (S)-tetrahydrodipicolinate (acetylase route): step 1/3. Catalyzes the transfer of an acetyl group from acetyl-CoA to tetrahydrodipicolinate. The protein is 2,3,4,5-tetrahydropyridine-2,6-dicarboxylate N-acetyltransferase of Staphylococcus aureus (strain bovine RF122 / ET3-1).